We begin with the raw amino-acid sequence, 556 residues long: Glutamine--tRNA ligase (556 aa).

The short motif at proline 34–histidine 44 is the 'HIGH' region element. ATP-binding positions include glutamate 35–asparagine 37 and histidine 41–serine 47. Positions 67 and 212 each coordinate L-glutamine. ATP is bound by residues threonine 231, arginine 261–leucine 262, and methionine 269–lysine 271. The 'KMSKS' region motif lies at isoleucine 268–arginine 272.

This sequence belongs to the class-I aminoacyl-tRNA synthetase family. In terms of assembly, monomer.

The protein resides in the cytoplasm. The catalysed reaction is tRNA(Gln) + L-glutamine + ATP = L-glutaminyl-tRNA(Gln) + AMP + diphosphate. This chain is Glutamine--tRNA ligase, found in Sodalis glossinidius (strain morsitans).